A 251-amino-acid chain; its full sequence is Large ribosomal subunit protein uL4 (251 aa).

It belongs to the universal ribosomal protein uL4 family. In terms of assembly, part of the 50S ribosomal subunit.

In terms of biological role, one of the primary rRNA binding proteins, this protein initially binds near the 5'-end of the 23S rRNA. It is important during the early stages of 50S assembly. It makes multiple contacts with different domains of the 23S rRNA in the assembled 50S subunit and ribosome. Its function is as follows. Forms part of the polypeptide exit tunnel. In Methanothrix thermoacetophila (strain DSM 6194 / JCM 14653 / NBRC 101360 / PT) (Methanosaeta thermophila), this protein is Large ribosomal subunit protein uL4.